We begin with the raw amino-acid sequence, 56 residues long: PI-stichotoxin-Hcr2f (56 aa).

Positions 4–54 constitute a BPTI/Kunitz inhibitor domain; it reads CSEPKVVGPCKAGLRRFYYDSETGECKPFIYGGCKGNKNNFETLHACRGIC. 3 disulfides stabilise this stretch: C4-C54, C13-C37, and C29-C50.

It belongs to the venom Kunitz-type family. Sea anemone type 2 potassium channel toxin subfamily. Post-translationally, contains 3 disulfide bonds.

The protein resides in the secreted. Its subcellular location is the nematocyst. In terms of biological role, dual-function toxin that inhibits both serine proteases and voltage-gated potassium channels. Has potent activity on both trypsin (Ki=28 nM) and chymotrypsin (Kd=1.8 nM). Shows inhibitory activity against 4 of the 7 potassium channels tested (rKv1.1/KCNA1; IC(50)=142.6 nM, hKv1.3/KCNA3; IC(50)=40.7 nM, rKv1.6/KCNA6; IC(50)=154.9 nM and drosophila Shaker; IC(50)=433.1 nM). Has an anti-inflammatory effect in LPS-activated macrophages in vitro, specifically reducing release of TNF and IL6 but not nitric oxide and reducing expression of IL1B precursor. In contrast to some paralogs, this protein decreases reactive oxygen species (ROS) level in the oxidative stress agent 6-hydroxydopamine (6-OHDA)-induced neurotoxicity model, but does not show cytoprotective activity on neuroblastoma cells. This protein also shows a weak free-radical scavenging activity. In vivo, when tested in a mice model of acute local inflammation, it reduces paw edema during 24 hours. In addition, it also reduces the synthesis of TNF in this model. In Radianthus crispa (Leathery sea anemone), this protein is PI-stichotoxin-Hcr2f.